We begin with the raw amino-acid sequence, 416 residues long: UPF0761 membrane protein Rfer_2991 (416 aa).

6 consecutive transmembrane segments (helical) span residues 60–80 (MALV…PMFA), 117–137 (LGGA…LTID), 156–176 (VLVY…SLSI), 187–207 (VVGV…FFMV), 222–242 (WVKW…LELA), and 268–288 (ILLI…VIAA).

It belongs to the UPF0761 family.

The protein localises to the cell inner membrane. The polypeptide is UPF0761 membrane protein Rfer_2991 (Albidiferax ferrireducens (strain ATCC BAA-621 / DSM 15236 / T118) (Rhodoferax ferrireducens)).